Here is a 135-residue protein sequence, read N- to C-terminus: NADH-quinone oxidoreductase subunit K (135 aa).

The next 3 membrane-spanning stretches (helical) occupy residues V33–G53, F63–V83, and I95–L115.

This sequence belongs to the complex I subunit 4L family. In terms of assembly, NDH-1 is composed of 14 different subunits. Subunits NuoA, H, J, K, L, M, N constitute the membrane sector of the complex.

The protein localises to the cell inner membrane. The catalysed reaction is a quinone + NADH + 5 H(+)(in) = a quinol + NAD(+) + 4 H(+)(out). In terms of biological role, NDH-1 shuttles electrons from NADH, via FMN and iron-sulfur (Fe-S) centers, to quinones in the respiratory chain. The immediate electron acceptor for the enzyme in this species is believed to be ubiquinone. Couples the redox reaction to proton translocation (for every two electrons transferred, four hydrogen ions are translocated across the cytoplasmic membrane), and thus conserves the redox energy in a proton gradient. The chain is NADH-quinone oxidoreductase subunit K from Psychrobacter cryohalolentis (strain ATCC BAA-1226 / DSM 17306 / VKM B-2378 / K5).